Reading from the N-terminus, the 185-residue chain is Recombination protein RecR (185 aa).

The C4-type zinc-finger motif lies at 44–59; it reads CSVCFHLSSEPVCEIC. The Toprim domain maps to 67 to 161; sequence NTICVVADSR…KVTRIAFGLP (95 aa).

Belongs to the RecR family.

Its function is as follows. May play a role in DNA repair. It seems to be involved in an RecBC-independent recombinational process of DNA repair. It may act with RecF and RecO. This Trichormus variabilis (strain ATCC 29413 / PCC 7937) (Anabaena variabilis) protein is Recombination protein RecR.